Here is a 131-residue protein sequence, read N- to C-terminus: Fluoride-specific ion channel FluC 2 (131 aa).

The next 4 helical transmembrane spans lie at 5 to 25 (FGVA…SLLV), 39 to 59 (LATL…TTLA), 70 to 90 (LAVG…AWES), and 104 to 124 (LYVL…RALA). G78 and T81 together coordinate Na(+).

Belongs to the fluoride channel Fluc/FEX (TC 1.A.43) family.

Its subcellular location is the cell membrane. It carries out the reaction fluoride(in) = fluoride(out). With respect to regulation, na(+) is not transported, but it plays an essential structural role and its presence is essential for fluoride channel function. In terms of biological role, fluoride-specific ion channel. Important for reducing fluoride concentration in the cell, thus reducing its toxicity. This Deinococcus geothermalis (strain DSM 11300 / CIP 105573 / AG-3a) protein is Fluoride-specific ion channel FluC 2.